The primary structure comprises 149 residues: Nucleoside diphosphate kinase (149 aa).

ATP contacts are provided by Lys-9, Phe-57, Arg-85, Thr-91, Arg-102, and Asn-112. The Pros-phosphohistidine intermediate role is filled by His-115.

This sequence belongs to the NDK family. Mg(2+) is required as a cofactor.

It localises to the cytoplasm. The enzyme catalyses a 2'-deoxyribonucleoside 5'-diphosphate + ATP = a 2'-deoxyribonucleoside 5'-triphosphate + ADP. It catalyses the reaction a ribonucleoside 5'-diphosphate + ATP = a ribonucleoside 5'-triphosphate + ADP. Functionally, major role in the synthesis of nucleoside triphosphates other than ATP. The ATP gamma phosphate is transferred to the NDP beta phosphate via a ping-pong mechanism, using a phosphorylated active-site intermediate. The protein is Nucleoside diphosphate kinase of Methanococcoides burtonii (strain DSM 6242 / NBRC 107633 / OCM 468 / ACE-M).